The primary structure comprises 60 residues: uncharacterized protein (60 aa).

Residues 19 to 39 (LSIMCGCSIYFLLLVFILTFY) traverse the membrane as a helical segment.

The protein resides in the membrane. This is an uncharacterized protein from Saccharomyces cerevisiae (strain ATCC 204508 / S288c) (Baker's yeast).